The sequence spans 254 residues: Thiazole synthase (254 aa).

K95 (schiff-base intermediate with DXP) is an active-site residue. Residues G156, 182–183 (AG), and 204–205 (NT) contribute to the 1-deoxy-D-xylulose 5-phosphate site.

It belongs to the ThiG family. As to quaternary structure, homotetramer. Forms heterodimers with either ThiH or ThiS.

It localises to the cytoplasm. The catalysed reaction is [ThiS sulfur-carrier protein]-C-terminal-Gly-aminoethanethioate + 2-iminoacetate + 1-deoxy-D-xylulose 5-phosphate = [ThiS sulfur-carrier protein]-C-terminal Gly-Gly + 2-[(2R,5Z)-2-carboxy-4-methylthiazol-5(2H)-ylidene]ethyl phosphate + 2 H2O + H(+). It participates in cofactor biosynthesis; thiamine diphosphate biosynthesis. Its function is as follows. Catalyzes the rearrangement of 1-deoxy-D-xylulose 5-phosphate (DXP) to produce the thiazole phosphate moiety of thiamine. Sulfur is provided by the thiocarboxylate moiety of the carrier protein ThiS. In vitro, sulfur can be provided by H(2)S. The sequence is that of Thiazole synthase from Shewanella oneidensis (strain ATCC 700550 / JCM 31522 / CIP 106686 / LMG 19005 / NCIMB 14063 / MR-1).